An 89-amino-acid chain; its full sequence is U-scoloptoxin(11)-Sm4a (89 aa).

The N-terminal stretch at 1 to 17 (MFFKLVLVSAVAIQALS) is a signal peptide.

Belongs to the scoloptoxin-11 family. Contains 3 disulfide bonds. In terms of tissue distribution, expressed by the venom gland.

It is found in the secreted. This Scolopendra morsitans (Tanzanian blue ringleg centipede) protein is U-scoloptoxin(11)-Sm4a.